We begin with the raw amino-acid sequence, 287 residues long: Hydroxysteroid 11-beta-dehydrogenase 1-like protein (287 aa).

A signal peptide spans 1–22; it reads MKLYAKLLLCSICVAFIAVRWS. NADP(+) contacts are provided by residues 40 to 66, 91 to 92, and 118 to 120; these read GAST…TARR, DM, and NHI. Residue serine 169 coordinates substrate. Tyrosine 182 serves as the catalytic Proton acceptor. Residues 182–186 and 215–221 contribute to the NADP(+) site; these read YASTK and GLIDTDS.

It belongs to the short-chain dehydrogenases/reductases (SDR) family.

It is found in the secreted. The catalysed reaction is cortisone + NADPH + H(+) = cortisol + NADP(+). Functionally, unidirectional NADP(+)-dependent cortisol dehydrogenase (in vitro). This Danio rerio (Zebrafish) protein is Hydroxysteroid 11-beta-dehydrogenase 1-like protein (hsd11b1l).